A 141-amino-acid polypeptide reads, in one-letter code: Nucleoside diphosphate kinase (141 aa).

Residues Lys11, Phe59, Arg87, Thr93, Arg104, and Asn114 each coordinate ATP. His117 serves as the catalytic Pros-phosphohistidine intermediate.

It belongs to the NDK family. In terms of assembly, homotetramer. It depends on Mg(2+) as a cofactor.

Its subcellular location is the cytoplasm. The catalysed reaction is a 2'-deoxyribonucleoside 5'-diphosphate + ATP = a 2'-deoxyribonucleoside 5'-triphosphate + ADP. It catalyses the reaction a ribonucleoside 5'-diphosphate + ATP = a ribonucleoside 5'-triphosphate + ADP. In terms of biological role, major role in the synthesis of nucleoside triphosphates other than ATP. The ATP gamma phosphate is transferred to the NDP beta phosphate via a ping-pong mechanism, using a phosphorylated active-site intermediate. The chain is Nucleoside diphosphate kinase from Bordetella petrii (strain ATCC BAA-461 / DSM 12804 / CCUG 43448).